An 834-amino-acid polypeptide reads, in one-letter code: Glycerol-3-phosphate acyltransferase (834 aa).

Residues 304–309 (CHRSHM) carry the HXXXXD motif motif. The interval 800–834 (SVSMPAETSNQPEAPETPETPETPETPEPEGKTES) is disordered.

Belongs to the GPAT/DAPAT family.

The protein localises to the cell inner membrane. The enzyme catalyses sn-glycerol 3-phosphate + an acyl-CoA = a 1-acyl-sn-glycero-3-phosphate + CoA. The protein operates within phospholipid metabolism; CDP-diacylglycerol biosynthesis; CDP-diacylglycerol from sn-glycerol 3-phosphate: step 1/3. This chain is Glycerol-3-phosphate acyltransferase, found in Yersinia pseudotuberculosis serotype I (strain IP32953).